The following is a 146-amino-acid chain: Large ribosomal subunit protein uL15 (146 aa).

Residues 1–51 (MQLNTIKPAEGSKKNRRHVGRGIGSGLGKTAGRGHKGQKSRSGGFHKVGFE) are disordered. Gly residues predominate over residues 21–31 (RGIGSGLGKTA).

The protein belongs to the universal ribosomal protein uL15 family. In terms of assembly, part of the 50S ribosomal subunit.

Its function is as follows. Binds to the 23S rRNA. In Polynucleobacter necessarius subsp. necessarius (strain STIR1), this protein is Large ribosomal subunit protein uL15.